A 311-amino-acid polypeptide reads, in one-letter code: Olfactory receptor 2A5 (311 aa).

Residues 1 to 24 (MTKNQTWVTEFILLGFPLSLRIQM) are Extracellular-facing. Asparagine 4 is a glycosylation site (N-linked (GlcNAc...) asparagine). Residues 25–48 (LLSGLFSLLYVFTLLGNGAILGLI) form a helical membrane-spanning segment. Residues 49–56 (WLDSRLHT) lie on the Cytoplasmic side of the membrane. A helical transmembrane segment spans residues 57-78 (PMYFFLSHLAIIDISYASNNVP). Over 79–100 (KMLTNLGLNKRKTISFVPCTMQ) the chain is Extracellular. A disulfide bridge connects residues cysteine 97 and cysteine 189. A helical transmembrane segment spans residues 101-120 (TFLYMAFAHTECLILVMMSY). The Cytoplasmic portion of the chain corresponds to 121–139 (DRYMAICHPLQYSVIMRWG). The helical transmembrane segment at 140-158 (VCTVLAVTSWACGSLLALV) threads the bilayer. Topologically, residues 159–196 (HVVLILRLPFCGPHEINHFFCEILSVLKLACADTWLNQ) are extracellular. The chain crosses the membrane as a helical span at residues 197–219 (VVIFAASVFILVGPLCLVLVSYS). Topologically, residues 220 to 236 (RILAAILRIQSGEGRRK) are cytoplasmic. A helical transmembrane segment spans residues 237–259 (AFSTCSSHLCMVGLFFGSAIVMY). Over 260-272 (MAPKSRHPEEQQK) the chain is Extracellular. Residues 273 to 292 (VLSLFYSLFNPMLNPLIYSL) form a helical membrane-spanning segment. Residues 293–311 (RNAEVKGALKRVLWKQRSK) lie on the Cytoplasmic side of the membrane.

It belongs to the G-protein coupled receptor 1 family.

The protein localises to the cell membrane. Functionally, odorant receptor. The sequence is that of Olfactory receptor 2A5 (OR2A5) from Homo sapiens (Human).